Here is a 625-residue protein sequence, read N- to C-terminus: Procollagen galactosyltransferase 2 (625 aa).

Residues 1 to 26 (MAARLATVACALFLLSSALLRLGCRA) form the signal peptide. 4 N-linked (GlcNAc...) asparagine glycosylation sites follow: N96, N184, N381, and N579. The interval 597 to 625 (QGHIRSTAKNTEALPPPTSLDTVPSRDEL) is disordered. A Prevents secretion from ER motif is present at residues 622–625 (RDEL).

The protein belongs to the glycosyltransferase 25 family.

It is found in the endoplasmic reticulum lumen. The enzyme catalyses (5R)-5-hydroxy-L-lysyl-[collagen] + UDP-alpha-D-galactose = (5R)-5-O-(beta-D-galactosyl)-5-hydroxy-L-lysyl-[collagen] + UDP + H(+). Functionally, beta-galactosyltransferase that transfers beta-galactose to hydroxylysine residues of collagen. The protein is Procollagen galactosyltransferase 2 (Colgalt2) of Mus musculus (Mouse).